The chain runs to 314 residues: Ribosomal protein L11 methyltransferase (314 aa).

S-adenosyl-L-methionine-binding residues include Thr-161, Gly-182, Asp-204, and Asn-248.

It belongs to the methyltransferase superfamily. PrmA family.

It is found in the cytoplasm. It carries out the reaction L-lysyl-[protein] + 3 S-adenosyl-L-methionine = N(6),N(6),N(6)-trimethyl-L-lysyl-[protein] + 3 S-adenosyl-L-homocysteine + 3 H(+). Methylates ribosomal protein L11. This is Ribosomal protein L11 methyltransferase from Listeria monocytogenes serotype 4b (strain CLIP80459).